We begin with the raw amino-acid sequence, 216 residues long: MOB kinase activator 3C (216 aa).

The Zn(2+) site is built by Cys82, Cys87, His164, and His169.

The protein belongs to the MOB1/phocein family.

Functionally, may regulate the activity of kinases. This is MOB kinase activator 3C (MOB3C) from Bos taurus (Bovine).